The primary structure comprises 235 residues: UPF0758 protein Swol_1642 (235 aa).

Residues 109–235 enclose the MPN domain; it reads IIKSPEDVQE…YCSLKARGLI (127 aa). 3 residues coordinate Zn(2+): H184, H186, and D197. A JAMM motif motif is present at residues 184–197; sequence HNHPSGDPTPSQED.

Belongs to the UPF0758 family.

This chain is UPF0758 protein Swol_1642, found in Syntrophomonas wolfei subsp. wolfei (strain DSM 2245B / Goettingen).